We begin with the raw amino-acid sequence, 240 residues long: Diglucosylglycerate octanoyltransferase (240 aa).

The protein belongs to the OctT acyltransferase family. Homotetramer.

It carries out the reaction (2R)-2-O-[alpha-D-glucopyranosyl-(1-&gt;6)-alpha-D-glucopyranosyl]-glycerate + octanoyl-CoA = (2R)-2-O-[6-O-octanoyl-alpha-D-glucopyranosyl-(1-&gt;6)-alpha-D-glucopyranosyl]-glycerate + CoA. Functionally, sugar octanoyltransferase likely involved in the biosynthesis of mycobacterial methylglucose lipopolysaccharide (MGLP). Catalyzes the transfer of an octanoyl group from octanoyl-CoA to the C6 OH of the second glucose in diglucosylglycerate (DGG). Can also use hexanoyl-CoA as acyl donor in vitro. DGG is the preferred acceptor, but to a lesser extent, GG (glucosylglycerate) can be used as substrate. DGG and GG are the two earliest intermediates in MGLP biosynthesis. The sequence is that of Diglucosylglycerate octanoyltransferase from Mycolicibacterium hassiacum (strain DSM 44199 / CIP 105218 / JCM 12690 / 3849) (Mycobacterium hassiacum).